Consider the following 508-residue polypeptide: POTE ankyrin domain family member G (508 aa).

5 ANK repeats span residues 172-201, 205-234, 238-267, 271-300, and 304-333; these read QKRT…QLNI, KKRT…DPNI, YGNT…DIES, HGLT…NLNA, and YGRT…DVSS. Polar residues predominate over residues 367–376; sequence KVSSENSNPE. Residues 367–488 form a disordered region; that stretch reads KVSSENSNPE…QLSEEQNTGI (122 aa). 2 stretches are compositionally biased toward basic and acidic residues: residues 377 to 392 and 406 to 421; these read QDLK…RLKG and EINK…EMKK. Polar residues predominate over residues 476-488; that stretch reads TQKQLSEEQNTGI.

It belongs to the POTE family.

The sequence is that of POTE ankyrin domain family member G (POTEG) from Homo sapiens (Human).